A 337-amino-acid chain; its full sequence is MANSC domain-containing protein 4 (337 aa).

The N-terminal stretch at 1–18 (MRAVELLLLLGLASMVHG) is a signal peptide. Over 19 to 278 (LCSPTVFYRD…SSENEEPWDG (260 aa)) the chain is Extracellular. The region spanning 33–113 (RFPGMLLDLE…LEPGASAILY (81 aa)) is the MANSC domain. 3 N-linked (GlcNAc...) asparagine glycosylation sites follow: Asn114, Asn227, and Asn251. 2 stretches are compositionally biased toward polar residues: residues 216–230 (SPST…NKTI) and 239–260 (TRVS…VNKT). The tract at residues 216-277 (SPSTDFTHSP…HSSENEEPWD (62 aa)) is disordered. A helical membrane pass occupies residues 279–299 (APASAGVWLACVTLGAAVISL). At 300–337 (CCRVVLGTSRCCGKRQGWSHMGQRSASGCRRNTLKENS) the chain is on the cytoplasmic side. Residues 314-337 (RQGWSHMGQRSASGCRRNTLKENS) are disordered.

The protein localises to the membrane. The chain is MANSC domain-containing protein 4 (Mansc4) from Mus musculus (Mouse).